Reading from the N-terminus, the 147-residue chain is Austinoid biosynthesis clusters protein H (147 aa).

The protein belongs to the trt14 isomerase family. As to quaternary structure, homodimer.

Its pathway is secondary metabolite biosynthesis; terpenoid biosynthesis. Its function is as follows. Part of the gene cluster B that mediates the biosynthesis of the fungal meroterpenoid acetoxydehydroaustin. The first step of the pathway is the synthesis of 3,5-dimethylorsellinic acid by the polyketide synthase ausA. 3,5-dimethylorsellinic acid is then prenylated by the polyprenyl transferase ausN. Further epoxidation by the FAD-dependent monooxygenase ausM and cyclization by the probable terpene cyclase ausL lead to the formation of protoaustinoid A. Protoaustinoid A is then oxidized to spiro-lactone preaustinoid A3 by the combined action of the FAD-binding monooxygenases ausB and ausC, and the dioxygenase ausE. Acid-catalyzed keto-rearrangement and ring contraction of the tetraketide portion of preaustinoid A3 by ausJ lead to the formation of preaustinoid A4. The aldo-keto reductase ausK, with the help of ausH, is involved in the next step by transforming preaustinoid A4 into isoaustinone which is in turn hydroxylated by the P450 monooxygenase ausI to form austinolide. The cytochrome P450 monooxygenase ausG then modifies austinolide to austinol. Austinol is further acetylated to austin by the O-acetyltransferase ausP, which spontaneously changes to dehydroaustin. The cytochrome P450 monooxygenase then converts dehydroaustin is into 7-dehydrodehydroaustin. The hydroxylation catalyzed by ausR permits the second O-acetyltransferase ausQ to add an additional acetyl group to the molecule, leading to the formation of acetoxydehydroaustin. Due to genetic rearrangements of the clusters and the subsequent loss of some enzymes, the end product of the Penicillium brasilianum austinoid biosynthesis clusters is acetoxydehydroaustin. This chain is Austinoid biosynthesis clusters protein H, found in Penicillium brasilianum.